The following is a 391-amino-acid chain: Mannose-6-phosphate isomerase (391 aa).

4 residues coordinate Zn(2+): glutamine 97, histidine 99, glutamate 134, and histidine 255. Residue arginine 274 is part of the active site.

This sequence belongs to the mannose-6-phosphate isomerase type 1 family. Requires Zn(2+) as cofactor.

The protein resides in the cytoplasm. The catalysed reaction is D-mannose 6-phosphate = D-fructose 6-phosphate. Involved in the conversion of glucose to GDP-L-fucose, which can be converted to L-fucose, a capsular polysaccharide. This is Mannose-6-phosphate isomerase (manA) from Salmonella typhimurium (strain LT2 / SGSC1412 / ATCC 700720).